A 590-amino-acid chain; its full sequence is MMRSVAVIGKKCLHRHTVLLKGNPRTTLCWERSFAGASSDDCRENLSRKVLQDLKLDDAIGLFGDMVKSRPFPSIVEFSKLLSAIAKMNKFDLVISLGEQMQNLGISHNLYTYSIFINYFCRRSQLSLALAILGKMMKLGYGPSIVTLNSLLNGFCHGNRISEAVALVDQMVEMGYQPDTVTFTTLVHGLFQHNKASEAVALVERMVVKGCQPDLVTYGAVINGLCKRGEPDLALNLLNKMEKGKIEADVVIYNTIIDGLCKYKHMDDAFDLFNKMETKGIKPDVFTYNPLISCLCNYGRWSDASRLLSDMLEKNINPDLVFFNALIDAFVKEGKLVEAEKLYDEMVKSKHCFPDVVAYNTLIKGFCKYKRVEEGMEVFREMSQRGLVGNTVTYTTLIHGFFQARDCDNAQMVFKQMVSDGVHPDIMTYNILLDGLCNNGNVETALVVFEYMQKRDMKLDIVTYTTMIEALCKAGKVEDGWDLFCSLSLKGVKPNVVTYTTMMSGFCRKGLKEEADALFVEMKEDGPLPNSGTYNTLIRARLRDGDEAASAELIKEMRSCGFAGDASTFGLVTNMLHDGRLDKSFLDMLS.

Residues 1-34 (MMRSVAVIGKKCLHRHTVLLKGNPRTTLCWERSF) constitute a mitochondrion transit peptide. PPR repeat units lie at residues 74–108 (SIVEFSKLLSAIAKMNKFDLVISLGEQMQNLGISH), 109–143 (NLYTYSIFINYFCRRSQLSLALAILGKMMKLGYGP), 144–178 (SIVTLNSLLNGFCHGNRISEAVALVDQMVEMGYQP), 179–213 (DTVTFTTLVHGLFQHNKASEAVALVERMVVKGCQP), 214–248 (DLVTYGAVINGLCKRGEPDLALNLLNKMEKGKIEA), 249–283 (DVVIYNTIIDGLCKYKHMDDAFDLFNKMETKGIKP), 284–318 (DVFTYNPLISCLCNYGRWSDASRLLSDMLEKNINP), 319–353 (DLVFFNALIDAFVKEGKLVEAEKLYDEMVKSKHCF), 355–389 (DVVAYNTLIKGFCKYKRVEEGMEVFREMSQRGLVG), 390–424 (NTVTYTTLIHGFFQARDCDNAQMVFKQMVSDGVHP), 425–459 (DIMTYNILLDGLCNNGNVETALVVFEYMQKRDMKL), 460–494 (DIVTYTTMIEALCKAGKVEDGWDLFCSLSLKGVKP), 495–529 (NVVTYTTMMSGFCRKGLKEEADALFVEMKEDGPLP), and 530–564 (NSGTYNTLIRARLRDGDEAASAELIKEMRSCGFAG).

The protein belongs to the PPR family. P subfamily.

Its subcellular location is the mitochondrion. The polypeptide is Pentatricopeptide repeat-containing protein At1g63070, mitochondrial (Arabidopsis thaliana (Mouse-ear cress)).